Reading from the N-terminus, the 277-residue chain is Probable enoyl-CoA hydratase, mitochondrial (277 aa).

The N-terminal 42 residues, 1–42, are a transit peptide targeting the mitochondrion; sequence MLKQVIKTVSSSQAPKKYFFKQFCTSTTEKKGRVGLVTLNRP. Substrate is bound by residues 85–88 and glycine 128; that span reads ADIK.

The protein belongs to the enoyl-CoA hydratase/isomerase family. As to quaternary structure, homohexamer; dimer of trimers.

The protein localises to the mitochondrion matrix. It catalyses the reaction a (3S)-3-hydroxyacyl-CoA = a (2E)-enoyl-CoA + H2O. The catalysed reaction is a 4-saturated-(3S)-3-hydroxyacyl-CoA = a (3E)-enoyl-CoA + H2O. It carries out the reaction (3S)-3-hydroxybutanoyl-CoA = (2E)-butenoyl-CoA + H2O. The enzyme catalyses 3-hydroxyisovaleryl-CoA = 3-methylbut-2-enoyl-CoA + H2O. It catalyses the reaction 3-hydroxypropanoyl-CoA = acryloyl-CoA + H2O. The catalysed reaction is 3-hydroxybutanoyl-CoA = (2E)-butenoyl-CoA + H2O. It functions in the pathway lipid metabolism; fatty acid beta-oxidation. Its function is as follows. Straight-chain enoyl-CoA thioesters from C4 up to at least C16 are processed, although with decreasing catalytic rate. This Dictyostelium discoideum (Social amoeba) protein is Probable enoyl-CoA hydratase, mitochondrial (echs1).